We begin with the raw amino-acid sequence, 106 residues long: MSTAIAQQKIRIRLKAFDRRMLDLSCEKIIETADNTAATAIGPIPLPTKRKIYCVLRSPHVDKDSREHFETRTHRRIIDIYSPSAKTIDALMKLDLPSGVDIEVKL.

The protein belongs to the universal ribosomal protein uS10 family. As to quaternary structure, part of the 30S ribosomal subunit.

Involved in the binding of tRNA to the ribosomes. The sequence is that of Small ribosomal subunit protein uS10 from Synechococcus sp. (strain CC9605).